The chain runs to 181 residues: Urease accessory protein UreE (181 aa).

The interval 143–181 (FDPEPGAYNQAGQGHSHGHSHGHSHNHDHEHSHGHKHAH) is disordered.

It belongs to the UreE family.

The protein resides in the cytoplasm. Functionally, involved in urease metallocenter assembly. Binds nickel. Probably functions as a nickel donor during metallocenter assembly. The chain is Urease accessory protein UreE from Marinobacter nauticus (strain ATCC 700491 / DSM 11845 / VT8) (Marinobacter aquaeolei).